We begin with the raw amino-acid sequence, 212 residues long: MSEQSSSSRYQQLQNEEEPGENAQASADAPPPYSSIAGESSGLFDYKDELGFPKPPSYNVATTLPSYDEAERSKAEATIPLVPGRDDDFVARDDFDDADQLRIGNDGIFMLTFFMAFLFNWIGFFLSFCLTSSAAGRYGAISGFGLSLIKWILIVRFSTYFPGYFDGQYWLWWVFLVLGFLLFLRGFINYAKVRKMPDNFSTLPRTRVLFIY.

Residues 1–14 (MSEQSSSSRYQQLQ) are compositionally biased toward polar residues. The segment at 1-40 (MSEQSSSSRYQQLQNEEEPGENAQASADAPPPYSSIAGES) is disordered. Residues 1-107 (MSEQSSSSRY…ADQLRIGNDG (107 aa)) lie on the Cytoplasmic side of the membrane. 2 consecutive short sequence motifs (PPxY motif) follow at residues 30 to 33 (PPPY) and 55 to 58 (PPSY). A helical transmembrane segment spans residues 108–128 (IFMLTFFMAFLFNWIGFFLSF). The Extracellular segment spans residues 129–134 (CLTSSA). A helical transmembrane segment spans residues 135 to 155 (AGRYGAISGFGLSLIKWILIV). Topologically, residues 156 to 163 (RFSTYFPG) are cytoplasmic. Residues 164–184 (YFDGQYWLWWVFLVLGFLLFL) traverse the membrane as a helical segment. The Extracellular segment spans residues 185-212 (RGFINYAKVRKMPDNFSTLPRTRVLFIY).

Its subcellular location is the golgi apparatus membrane. Its function is as follows. May play a role in Golgi structure maintenance. This is NEDD4 family-interacting protein 1 (ndfip1) from Xenopus laevis (African clawed frog).